Reading from the N-terminus, the 957-residue chain is Translation initiation factor IF-2 (957 aa).

Disordered regions lie at residues 34–282 (KSHS…RVVK) and 311–367 (SQSL…TIAG). Pro residues predominate over residues 107–161 (PARPQPPQAPTRPTPPAPVAPKPVEPVAAKPPAPPAKPEPTPPRPVPTLVPPPTR). Positions 163–188 (TKKEEKVAATPPPRKELKEPPKKEKG) are enriched in basic and acidic residues. Residues 209-242 (PPAPAKPPEMAPKPALPELQPPPKPVRAPNPPKP) are compositionally biased toward pro residues. 2 stretches are compositionally biased toward basic and acidic residues: residues 250–259 (LDDKSVSKVI) and 266–275 (KDFDEEESKR). The region spanning 444–617 (RRPPVVTIMG…LLVAEVEDLY (174 aa)) is the tr-type G domain. A G1 region spans residues 453-460 (GHVDHGKT). Residue 453-460 (GHVDHGKT) participates in GTP binding. The interval 478–482 (GITQH) is G2. The G3 stretch occupies residues 503–506 (DTPG). GTP contacts are provided by residues 503-507 (DTPGH) and 557-560 (NKID). Residues 557-560 (NKID) are G4. A G5 region spans residues 593–595 (SAL).

It belongs to the TRAFAC class translation factor GTPase superfamily. Classic translation factor GTPase family. IF-2 subfamily.

Its subcellular location is the cytoplasm. In terms of biological role, one of the essential components for the initiation of protein synthesis. Protects formylmethionyl-tRNA from spontaneous hydrolysis and promotes its binding to the 30S ribosomal subunits. Also involved in the hydrolysis of GTP during the formation of the 70S ribosomal complex. The protein is Translation initiation factor IF-2 of Thermosynechococcus vestitus (strain NIES-2133 / IAM M-273 / BP-1).